A 312-amino-acid chain; its full sequence is Apolipoprotein E (312 aa).

The first 18 residues, 1 to 18, serve as a signal peptide directing secretion; the sequence is MKALWALLLVPLLTGCLA. Tandem repeats lie at residues 72–93, 94–115, 116–137, 138–159, 160–181, 182–203, 204–225, and 226–247. Positions 72–247 are 8 X 22 AA approximate tandem repeats; sequence VLMEDTMTEV…RLEEVRDQME (176 aa). The residue at position 135 (M135) is a Methionine sulfoxide. S139 is modified (phosphoserine). The tract at residues 150–160 is LDL and other lipoprotein receptors binding; the sequence is HLRKMRKRLMR. The LDL receptor binding stretch occupies residues 150–160; it reads HLRKMRKRLMR. 154-157 provides a ligand contact to heparin; that stretch reads MRKR. The lipid-binding and lipoprotein association stretch occupies residues 202–282; that stretch reads TANLGSGAAQ…GWFEPLVEDM (81 aa). Position 221–228 (221–228) interacts with heparin; sequence SDRIRGRL. A homooligomerization region spans residues 258–312; it reads QQIRLQAEVFQARLKGWFEPLVEDMQRQWANLMEKIQASVATNSIASTTVPLENQ. The interval 270 to 282 is specificity for association with VLDL; the sequence is RLKGWFEPLVEDM.

The protein belongs to the apolipoprotein A1/A4/E family. As to quaternary structure, homotetramer. May interact with ABCA1; functionally associated with ABCA1 in the biogenesis of HDLs. May interact with APP/A4 amyloid-beta peptide; the interaction is extremely stable in vitro but its physiological significance is unclear. May interact with MAPT. May interact with MAP2. In the cerebrospinal fluid, interacts with secreted SORL1. Interacts with PMEL; this allows the loading of PMEL luminal fragment on ILVs to induce fibril nucleation. APOE exists as multiple glycosylated and sialylated glycoforms within cells and in plasma. The extent of glycosylation and sialylation are tissue and context specific. Post-translationally, glycated in plasma VLDL. In terms of processing, phosphorylated by FAM20C in the extracellular medium.

The protein resides in the secreted. It localises to the extracellular space. The protein localises to the extracellular matrix. Its subcellular location is the extracellular vesicle. It is found in the endosome. The protein resides in the multivesicular body. APOE is an apolipoprotein, a protein associating with lipid particles, that mainly functions in lipoprotein-mediated lipid transport between organs via the plasma and interstitial fluids. APOE is a core component of plasma lipoproteins and is involved in their production, conversion and clearance. Apolipoproteins are amphipathic molecules that interact both with lipids of the lipoprotein particle core and the aqueous environment of the plasma. As such, APOE associates with chylomicrons, chylomicron remnants, very low density lipoproteins (VLDL) and intermediate density lipoproteins (IDL) but shows a preferential binding to high-density lipoproteins (HDL). It also binds a wide range of cellular receptors including the LDL receptor/LDLR, the LDL receptor-related proteins LRP1, LRP2 and LRP8 and the very low-density lipoprotein receptor/VLDLR that mediate the cellular uptake of the APOE-containing lipoprotein particles. Finally, APOE also has a heparin-binding activity and binds heparan-sulfate proteoglycans on the surface of cells, a property that supports the capture and the receptor-mediated uptake of APOE-containing lipoproteins by cells. A main function of APOE is to mediate lipoprotein clearance through the uptake of chylomicrons, VLDLs, and HDLs by hepatocytes. APOE is also involved in the biosynthesis by the liver of VLDLs as well as their uptake by peripheral tissues ensuring the delivery of triglycerides and energy storage in muscle, heart and adipose tissues. By participating in the lipoprotein-mediated distribution of lipids among tissues, APOE plays a critical role in plasma and tissues lipid homeostasis. APOE is also involved in two steps of reverse cholesterol transport, the HDLs-mediated transport of cholesterol from peripheral tissues to the liver, and thereby plays an important role in cholesterol homeostasis. First, it is functionally associated with ABCA1 in the biogenesis of HDLs in tissues. Second, it is enriched in circulating HDLs and mediates their uptake by hepatocytes. APOE also plays an important role in lipid transport in the central nervous system, regulating neuron survival and sprouting. This is Apolipoprotein E (Apoe) from Rattus rattus (Black rat).